The sequence spans 1377 residues: Dicer-like protein 2 (1377 aa).

The region spanning 23–203 is the Helicase ATP-binding domain; that stretch reads MFEASLQENI…LSMIESNMNA (181 aa). 36 to 43 contacts ATP; that stretch reads MDTGSGKT. The DEAH box motif lies at 144 to 147; it reads DEAH. One can recognise a Helicase C-terminal domain in the interval 367-544; it reads KLEALISFLS…ALALETMAEV (178 aa). The Dicer dsRNA-binding fold domain occupies 563-657; it reads AVARLHHFCS…LPLTRKPELR (95 aa). RNase III domains are found at residues 916-1056 and 1090-1274; these read ATRL…MDGG and NDSL…VDSR. Residues glutamate 1129, aspartate 1260, and glutamate 1263 each contribute to the Mg(2+) site.

Belongs to the helicase family. Dicer subfamily. Requires Mg(2+) as cofactor. It depends on Mn(2+) as a cofactor.

Its function is as follows. Dicer-like endonuclease involved in cleaving double-stranded RNA in the RNA interference (RNAi) pathway. Produces 21 to 25 bp dsRNAs (siRNAs) which target the selective destruction of homologous RNAs leading to sequence-specific suppression of gene expression, called post-transcriptional gene silencing (PTGS). Part of a broad host defense response against viral infection and transposons. The polypeptide is Dicer-like protein 2 (dcl2) (Aspergillus terreus (strain NIH 2624 / FGSC A1156)).